The chain runs to 816 residues: Leucine--tRNA ligase (816 aa).

A 'HIGH' region motif is present at residues 42–52 (PYPSGSLHMGH). A 'KMSKS' region motif is present at residues 574–578 (KMSKS). Lysine 577 is a binding site for ATP.

It belongs to the class-I aminoacyl-tRNA synthetase family.

Its subcellular location is the cytoplasm. The catalysed reaction is tRNA(Leu) + L-leucine + ATP = L-leucyl-tRNA(Leu) + AMP + diphosphate. This Ruthia magnifica subsp. Calyptogena magnifica protein is Leucine--tRNA ligase.